The primary structure comprises 418 residues: Beta-arrestin-1 (418 aa).

The interval 1-163 (MGDKGTRVFK…LEEKIHKRNS (163 aa)) is interaction with SRC. The segment at 45–86 (PEYLKERRVYVTLTCAFRYGREDLDVLGLTFRKDLFVANVQS) is interaction with CHRM2. Position 47 is a phosphotyrosine (Tyr47). The 1D-myo-inositol hexakisphosphate site is built by Lys250, Met255, Lys324, and Lys326. Positions 318 to 418 (IVSYKVKVKL…GTGSPQLNNR (101 aa)) are interaction with TRAF6. The disordered stretch occupies residues 353–375 (HPKPKEEPPHREVPENETPVDTN). The segment covering 355 to 366 (KPKEEPPHREVP) has biased composition (basic and acidic residues). Positions 385–395 (DIVFEDFARQR) match the [DE]-X(1,2)-F-X-X-[FL]-X-X-X-R motif motif. A disordered region spans residues 397–418 (KGMKDDKEEEEDGTGSPQLNNR). Ser412 bears the Phosphoserine; by GRK5 mark.

It belongs to the arrestin family. Monomer. Homodimer. Homooligomer; the self-association is mediated by InsP6-binding. Heterooligomer with ARRB2; the association is mediated by InsP6-binding. Interacts with GPR143. Interacts with ADRB2 (phosphorylated). Interacts with CHRM2 (phosphorylated). Interacts with LHCGR. Interacts with CYTH2 and CASR. Interacts with AP2B1 (dephosphorylated at 'Tyr-737'); phosphorylation of AP2B1 at 'Tyr-737' disrupts the interaction. Interacts (dephosphorylated at Ser-412) with CLTC. Interacts with CCR2 and GRK2. Interacts with CRR5. Interacts with PTAFR (phosphorylated on serine residues). Interacts with CLTC and MAP2K3. Interacts with CREB1. Interacts with TRAF6. Interacts with IGF1R and MDM2. Interacts with C5AR1. Interacts with PDE4D. Interacts with SRC (via the SH3 domain and the protein kinase domain); the interaction is independent of the phosphorylation state of SRC C-terminus. Interacts with TACR1. Interacts with RAF1. Interacts with CHUK, IKBKB and MAP3K14. Interacts with DVL1; the interaction is enhanced by phosphorylation of DVL1. Interacts with DVL2; the interaction is enhanced by phosphorylation of DVL2. Interacts with IGF1R. Associates with MAP kinase p38. Part of a MAPK signaling complex consisting of TACR1, ARRB1, SRC, MAPK1 (activated) and MAPK3 (activated). Part of a MAPK signaling complex consisting of F2RL1, ARRB1, RAF1, MAPK1 (activated) and MAPK3 (activated). Interacts with MAP2K4/MKK4. Interacts with HCK and CXCR1 (phosphorylated). Interacts with ACKR3 and ACKR4. Interacts with ARRDC1; the interaction is direct. Interacts with GPR61, GPR62 and GPR135. In terms of processing, constitutively phosphorylated at Ser-412 in the cytoplasm. At the plasma membrane, is rapidly dephosphorylated, a process that is required for clathrin binding and ADRB2 endocytosis but not for ADRB2 binding and desensitization. Once internalized, is rephosphorylated. Post-translationally, the ubiquitination status appears to regulate the formation and trafficking of beta-arrestin-GPCR complexes and signaling. Ubiquitination appears to occur GPCR-specific. Ubiquitinated by MDM2; the ubiquitination is required for rapid internalization of ADRB2. Deubiquitinated by USP33; the deubiquitination leads to a dissociation of the beta-arrestin-GPCR complex. Stimulation of a class A GPCR, such as ADRB2, induces transient ubiquitination and subsequently promotes association with USP33.

The protein resides in the cytoplasm. Its subcellular location is the nucleus. It localises to the cell membrane. The protein localises to the membrane. It is found in the clathrin-coated pit. The protein resides in the cell projection. Its subcellular location is the pseudopodium. It localises to the cytoplasmic vesicle. Functionally, functions in regulating agonist-mediated G-protein coupled receptor (GPCR) signaling by mediating both receptor desensitization and resensitization processes. During homologous desensitization, beta-arrestins bind to the GPRK-phosphorylated receptor and sterically preclude its coupling to the cognate G-protein; the binding appears to require additional receptor determinants exposed only in the active receptor conformation. The beta-arrestins target many receptors for internalization by acting as endocytic adapters (CLASPs, clathrin-associated sorting proteins) and recruiting the GPRCs to the adapter protein 2 complex 2 (AP-2) in clathrin-coated pits (CCPs). However, the extent of beta-arrestin involvement appears to vary significantly depending on the receptor, agonist and cell type. Internalized arrestin-receptor complexes traffic to intracellular endosomes, where they remain uncoupled from G-proteins. Two different modes of arrestin-mediated internalization occur. Class A receptors, like ADRB2, OPRM1, ENDRA, D1AR and ADRA1B dissociate from beta-arrestin at or near the plasma membrane and undergo rapid recycling. Class B receptors, like AVPR2, AGTR1, NTSR1, TRHR and TACR1 internalize as a complex with arrestin and traffic with it to endosomal vesicles, presumably as desensitized receptors, for extended periods of time. Receptor resensitization then requires that receptor-bound arrestin is removed so that the receptor can be dephosphorylated and returned to the plasma membrane. Involved in internalization of P2RY4 and UTP-stimulated internalization of P2RY2. Involved in phosphorylation-dependent internalization of OPRD1 ands subsequent recycling. Involved in the degradation of cAMP by recruiting cAMP phosphodiesterases to ligand-activated receptors. Beta-arrestins function as multivalent adapter proteins that can switch the GPCR from a G-protein signaling mode that transmits short-lived signals from the plasma membrane via small molecule second messengers and ion channels to a beta-arrestin signaling mode that transmits a distinct set of signals that are initiated as the receptor internalizes and transits the intracellular compartment. Acts as a signaling scaffold for MAPK pathways such as MAPK1/3 (ERK1/2). ERK1/2 activated by the beta-arrestin scaffold is largely excluded from the nucleus and confined to cytoplasmic locations such as endocytic vesicles, also called beta-arrestin signalosomes. Recruits c-Src/SRC to ADRB2 resulting in ERK activation. GPCRs for which the beta-arrestin-mediated signaling relies on both ARRB1 and ARRB2 (codependent regulation) include ADRB2, F2RL1 and PTH1R. For some GPCRs the beta-arrestin-mediated signaling relies on either ARRB1 or ARRB2 and is inhibited by the other respective beta-arrestin form (reciprocal regulation). Inhibits ERK1/2 signaling in AGTR1- and AVPR2-mediated activation (reciprocal regulation). Is required for SP-stimulated endocytosis of NK1R and recruits c-Src/SRC to internalized NK1R resulting in ERK1/2 activation, which is required for the antiapoptotic effects of SP. Is involved in proteinase-activated F2RL1-mediated ERK activity. Acts as a signaling scaffold for the AKT1 pathway. Is involved in alpha-thrombin-stimulated AKT1 signaling. Is involved in IGF1-stimulated AKT1 signaling leading to increased protection from apoptosis. Involved in activation of the p38 MAPK signaling pathway and in actin bundle formation. Involved in F2RL1-mediated cytoskeletal rearrangement and chemotaxis. Involved in AGTR1-mediated stress fiber formation by acting together with GNAQ to activate RHOA. Appears to function as signaling scaffold involved in regulation of MIP-1-beta-stimulated CCR5-dependent chemotaxis. Involved in attenuation of NF-kappa-B-dependent transcription in response to GPCR or cytokine stimulation by interacting with and stabilizing CHUK. May serve as nuclear messenger for GPCRs. Involved in OPRD1-stimulated transcriptional regulation by translocating to CDKN1B and FOS promoter regions and recruiting EP300 resulting in acetylation of histone H4. Involved in regulation of LEF1 transcriptional activity via interaction with DVL1 and/or DVL2 Also involved in regulation of receptors other than GPCRs. Involved in Toll-like receptor and IL-1 receptor signaling through the interaction with TRAF6 which prevents TRAF6 autoubiquitination and oligomerization required for activation of NF-kappa-B and JUN. Binds phosphoinositides. Binds inositolhexakisphosphate (InsP6). Involved in IL8-mediated granule release in neutrophils. Required for atypical chemokine receptor ACKR2-induced RAC1-LIMK1-PAK1-dependent phosphorylation of cofilin (CFL1) and for the up-regulation of ACKR2 from endosomal compartment to cell membrane, increasing its efficiency in chemokine uptake and degradation. Involved in the internalization of the atypical chemokine receptor ACKR3. Negatively regulates the NOTCH signaling pathway by mediating the ubiquitination and degradation of NOTCH1 by ITCH. Participates in the recruitment of the ubiquitin-protein ligase to the receptor. In Homo sapiens (Human), this protein is Beta-arrestin-1 (ARRB1).